The chain runs to 180 residues: Adenine phosphoribosyltransferase (180 aa).

Belongs to the purine/pyrimidine phosphoribosyltransferase family. Homodimer.

It localises to the cytoplasm. It carries out the reaction AMP + diphosphate = 5-phospho-alpha-D-ribose 1-diphosphate + adenine. It functions in the pathway purine metabolism; AMP biosynthesis via salvage pathway; AMP from adenine: step 1/1. Its function is as follows. Catalyzes a salvage reaction resulting in the formation of AMP, that is energically less costly than de novo synthesis. This Haemophilus influenzae (strain 86-028NP) protein is Adenine phosphoribosyltransferase.